The sequence spans 60 residues: Light-harvesting polypeptide B-885 alpha-2 chain (60 aa).

The Cytoplasmic segment spans residues 1-16 (SAPAQWKLWLVMDPRT). The helical transmembrane segment at 17 to 37 (VMIGTAAWLGVLALLIHFLLL) threads the bilayer. A bacteriochlorophyll is bound at residue H33. Residues 38–60 (GTERFNWIDTGLKEQKATAAAQA) are Periplasmic-facing.

This sequence belongs to the antenna complex alpha subunit family. In terms of assembly, the core complex is formed by different alpha and beta chains, binding bacteriochlorophyll molecules, and arranged most probably in tetrameric structures disposed around the reaction center. The non-pigmented gamma chains may constitute additional components.

It is found in the cell inner membrane. Its function is as follows. Antenna complexes are light-harvesting systems, which transfer the excitation energy to the reaction centers. This chain is Light-harvesting polypeptide B-885 alpha-2 chain, found in Rhodocyclus tenuis (Rhodospirillum tenue).